The sequence spans 87 residues: UPF0250 protein Spro_1197 (87 aa).

Belongs to the UPF0250 family.

This is UPF0250 protein Spro_1197 from Serratia proteamaculans (strain 568).